The following is a 536-amino-acid chain: CTP synthase (536 aa).

The segment at 1 to 266 (MKTKFIFVTG…DEQVVEKLNI (266 aa)) is amidoligase domain. Ser14 is a binding site for CTP. Ser14 lines the UTP pocket. ATP is bound by residues 15–20 (SIGKGL) and Asp72. 2 residues coordinate Mg(2+): Asp72 and Glu140. CTP is bound by residues 147 to 149 (DIE), 187 to 192 (KTKPTQ), and Lys223. Residues 187 to 192 (KTKPTQ) and Lys223 contribute to the UTP site. The 243-residue stretch at 292–534 (RIAIVGKYVN…IAAALDRKDK (243 aa)) folds into the Glutamine amidotransferase type-1 domain. Gly354 provides a ligand contact to L-glutamine. Cys381 (nucleophile; for glutamine hydrolysis) is an active-site residue. Residues 382–385 (LGMQ), Glu405, and Arg462 each bind L-glutamine. Residues His507 and Glu509 contribute to the active site.

Belongs to the CTP synthase family. As to quaternary structure, homotetramer.

The catalysed reaction is UTP + L-glutamine + ATP + H2O = CTP + L-glutamate + ADP + phosphate + 2 H(+). It catalyses the reaction L-glutamine + H2O = L-glutamate + NH4(+). It carries out the reaction UTP + NH4(+) + ATP = CTP + ADP + phosphate + 2 H(+). It participates in pyrimidine metabolism; CTP biosynthesis via de novo pathway; CTP from UDP: step 2/2. Allosterically activated by GTP, when glutamine is the substrate; GTP has no effect on the reaction when ammonia is the substrate. The allosteric effector GTP functions by stabilizing the protein conformation that binds the tetrahedral intermediate(s) formed during glutamine hydrolysis. Inhibited by the product CTP, via allosteric rather than competitive inhibition. Functionally, catalyzes the ATP-dependent amination of UTP to CTP with either L-glutamine or ammonia as the source of nitrogen. Regulates intracellular CTP levels through interactions with the four ribonucleotide triphosphates. This chain is CTP synthase, found in Geobacter sulfurreducens (strain ATCC 51573 / DSM 12127 / PCA).